Here is a 314-residue protein sequence, read N- to C-terminus: Homoserine kinase (314 aa).

96–106 (PIGSGLGSSAC) serves as a coordination point for ATP.

The protein belongs to the GHMP kinase family. Homoserine kinase subfamily.

Its subcellular location is the cytoplasm. It catalyses the reaction L-homoserine + ATP = O-phospho-L-homoserine + ADP + H(+). It participates in amino-acid biosynthesis; L-threonine biosynthesis; L-threonine from L-aspartate: step 4/5. In terms of biological role, catalyzes the ATP-dependent phosphorylation of L-homoserine to L-homoserine phosphate. This Histophilus somni (strain 129Pt) (Haemophilus somnus) protein is Homoserine kinase.